A 275-amino-acid polypeptide reads, in one-letter code: Dermonecrotic toxin LhSicTox-alphaVI1ii (275 aa).

His5 is a catalytic residue. Mg(2+) is bound by residues Glu25 and Asp27. Residue His41 is the Nucleophile of the active site. 2 disulfide bridges follow: Cys45/Cys51 and Cys47/Cys192. Asp85 contributes to the Mg(2+) binding site.

The protein belongs to the arthropod phospholipase D family. Class II subfamily. The cofactor is Mg(2+). In terms of tissue distribution, expressed by the venom gland.

Its subcellular location is the secreted. The catalysed reaction is an N-(acyl)-sphingosylphosphocholine = an N-(acyl)-sphingosyl-1,3-cyclic phosphate + choline. It carries out the reaction an N-(acyl)-sphingosylphosphoethanolamine = an N-(acyl)-sphingosyl-1,3-cyclic phosphate + ethanolamine. The enzyme catalyses a 1-acyl-sn-glycero-3-phosphocholine = a 1-acyl-sn-glycero-2,3-cyclic phosphate + choline. It catalyses the reaction a 1-acyl-sn-glycero-3-phosphoethanolamine = a 1-acyl-sn-glycero-2,3-cyclic phosphate + ethanolamine. Dermonecrotic toxins cleave the phosphodiester linkage between the phosphate and headgroup of certain phospholipids (sphingolipid and lysolipid substrates), forming an alcohol (often choline) and a cyclic phosphate. This toxin acts on sphingomyelin (SM). It may also act on ceramide phosphoethanolamine (CPE), lysophosphatidylcholine (LPC) and lysophosphatidylethanolamine (LPE), but not on lysophosphatidylserine (LPS), and lysophosphatidylglycerol (LPG). It acts by transphosphatidylation, releasing exclusively cyclic phosphate products as second products. Induces dermonecrosis, hemolysis, increased vascular permeability, edema, inflammatory response, and platelet aggregation. This chain is Dermonecrotic toxin LhSicTox-alphaVI1ii, found in Loxosceles hirsuta (Recluse spider).